We begin with the raw amino-acid sequence, 860 residues long: MQEQYRPEEIESKVQLHWDEKRTFEVTEDESKEKYYCLSMLPYPSGRLHMGHVRNYTIGDVIARYQRMLGKNVLQPIGWDAFGLPAEGAAVKNNTAPAPWTYDNIAYMKNQLKMLGFGYDWSRELATCTPEYYRWEQKFFTELYKKGLVYKKTSAVNWCPNDQTVLANEQVIDGCCWRCDTKVERKEIPQWFIKITAYADELLNDLDKLDHWPDTVKTMQRNWIGRSEGVEITFNVKDYDNTLTVYTTRPDTFMGCTYLAVAAGHPLAQKAAENNPELAAFIDECRNTKVAEAEMATMEKKGVDTGFKAVHPLTGEEIPVWAANFVLMEYGTGAVMAVPGHDQRDYEFASKYGLNIKPVILAADGSEPDLSQQALTEKGVLFNSGEFNGLDHEAAFNAIADKLTEMGVGERKVNYRLRDWGVSRQRYWGAPIPMVTLEDGTVMPTPDDQLPVILPEDVVMDGITSPIKADPEWAKTTVNGMPALRETDTFDTFMESSWYYARYTCPEYKEGMLDSKAANYWLPVDIYIGGIEHAIMHLLYFRFFHKLMRDAGMVNSDEPAKQLLCQGMVLADAFYYVGENGERNWVSPVDAIVERDEKGRIVKAKDAAGHELVYTGMSKMSKSKNNGIDPQVMVERYGADTVRLFMMFASPADMTLEWQESGVEGANRFLKRVWKLVYEHTAKGDVAALNVDALTEDQKALRRDVHKTIAKVTDDIGRRQTFNTAIAAIMELMNKLAKAPTDGEQDRALMQEALLAVVRMLNPFTPHICFTLWQELKGEGDIDNAPWPVADEKAMVEDSTLVVVQVNGKVRAKITVPVDATEEQVRERAGQEHLVAKYLDGVTVRKVIYVPGKLLNLVVG.

The short motif at 42–52 (PYPSGRLHMGH) is the 'HIGH' region element. The 'KMSKS' region signature appears at 619-623 (KMSKS). Lys-622 lines the ATP pocket.

It belongs to the class-I aminoacyl-tRNA synthetase family.

It localises to the cytoplasm. The catalysed reaction is tRNA(Leu) + L-leucine + ATP = L-leucyl-tRNA(Leu) + AMP + diphosphate. The chain is Leucine--tRNA ligase from Escherichia coli O45:K1 (strain S88 / ExPEC).